The sequence spans 163 residues: Large ribosomal subunit protein uL10 (163 aa).

It belongs to the universal ribosomal protein uL10 family. As to quaternary structure, part of the ribosomal stalk of the 50S ribosomal subunit. The N-terminus interacts with L11 and the large rRNA to form the base of the stalk. The C-terminus forms an elongated spine to which L12 dimers bind in a sequential fashion forming a multimeric L10(L12)X complex.

Functionally, forms part of the ribosomal stalk, playing a central role in the interaction of the ribosome with GTP-bound translation factors. This chain is Large ribosomal subunit protein uL10, found in Actinobacillus pleuropneumoniae serotype 5b (strain L20).